The sequence spans 90 residues: Small ribosomal subunit protein uS15 (90 aa).

This sequence belongs to the universal ribosomal protein uS15 family. Part of the 30S ribosomal subunit. Forms a bridge to the 50S subunit in the 70S ribosome, contacting the 23S rRNA.

Functionally, one of the primary rRNA binding proteins, it binds directly to 16S rRNA where it helps nucleate assembly of the platform of the 30S subunit by binding and bridging several RNA helices of the 16S rRNA. Forms an intersubunit bridge (bridge B4) with the 23S rRNA of the 50S subunit in the ribosome. The chain is Small ribosomal subunit protein uS15 from Campylobacter hominis (strain ATCC BAA-381 / DSM 21671 / CCUG 45161 / LMG 19568 / NCTC 13146 / CH001A).